A 711-amino-acid chain; its full sequence is Far upstream element-binding protein 2 (711 aa).

The segment at 1 to 147 is disordered; sequence MSDYSTGGPP…HPPPRTSMTE (147 aa). Serine 2 bears the N-acetylserine mark. Positions 8-17 are enriched in pro residues; sequence GPPPGPPPPA. 2 stretches are compositionally biased toward gly residues: residues 18 to 28 and 36 to 68; these read GGGGGAGGAGG and GAGD…GGPG. At arginine 40 the chain carries Omega-N-methylarginine. N6-acetyllysine is present on lysine 87. Serine 99 carries the post-translational modification Phosphoserine. The residue at position 100 (threonine 100) is a Phosphothreonine. Residues 110-122 are compositionally biased toward basic and acidic residues; that stretch reads RQLEDGDQPESKK. Lysine 121 participates in a covalent cross-link: Glycyl lysine isopeptide (Lys-Gly) (interchain with G-Cter in SUMO1); alternate. A Glycyl lysine isopeptide (Lys-Gly) (interchain with G-Cter in SUMO2); alternate cross-link involves residue lysine 121. Phosphoserine occurs at positions 125, 129, 131, 181, 184, 193, and 274. 3 KH domains span residues 144–208, 233–299, and 322–386; these read SMTE…KMML, GTVQ…CEMV, and GGGI…ARII. The interval 392–429 is disordered; sequence SLRSGPPGPPGGPGMPPGGRGRGRGQGNWGPPGGEMTF. A compositionally biased stretch (pro residues) spans 397 to 407; sequence PPGPPGGPGMP. Positions 408–424 are enriched in gly residues; it reads PGGRGRGRGQGNWGPPG. Omega-N-methylarginine is present on residues arginine 411, arginine 413, arginine 415, and arginine 442. The KH 4 domain occupies 424 to 491; sequence GGEMTFSIPT…QQIDHAKQLI (68 aa). Phosphoserine is present on serine 480. Residues 497-569 form a disordered region; sequence GPLCPVGPGP…HDPSKAAAAA (73 aa). Composition is skewed to pro residues over residues 501–520 and 528–542; these read PVGP…PFNP and PGAP…PHQY. The stretch at 571–582 is repeat 1; sequence DPNAAWAAYYSH. The 4 X 12 AA imperfect repeats stretch occupies residues 571-684; that stretch reads DPNAAWAAYY…SAAWAEYYRQ (114 aa). The segment at 583 to 711 is disordered; the sequence is YYQQPPGPVP…PTQQGQQQAQ (129 aa). The segment covering 587 to 613 has biased composition (pro residues); the sequence is PPGPVPGPAPAPAAPPAQGEPPQPPPT. 3 consecutive repeat copies span residues 617 to 628, 643 to 654, and 673 to 684.

Belongs to the KHSRP family. In terms of assembly, part of a ternary complex containing FUBP2, PTBP1, PTBP2 and HNRPH1. Interacts with PARN. Interacts with PQBP1. Post-translationally, phosphorylation at Ser-193 leads to the unfolding of the unstable KH domain 1, creating a site for 14-3-3 YWHAZ binding, which promotes nuclear localization and impairs the RNA degradation function. In terms of tissue distribution, detected in neural and non-neural cell lines.

It localises to the nucleus. Its subcellular location is the cytoplasm. Binds to the dendritic targeting element and may play a role in mRNA trafficking. Part of a ternary complex that binds to the downstream control sequence (DCS) of the pre-mRNA. Mediates exon inclusion in transcripts that are subject to tissue-specific alternative splicing. May interact with single-stranded DNA from the far-upstream element (FUSE). May activate gene expression. Also involved in degradation of inherently unstable mRNAs that contain AU-rich elements (AREs) in their 3'-UTR, possibly by recruiting degradation machinery to ARE-containing mRNAs. This is Far upstream element-binding protein 2 (KHSRP) from Homo sapiens (Human).